The sequence spans 150 residues: UPF0506 protein SJCHGC09643 (150 aa).

The signal sequence occupies residues methionine 1 to serine 18. N-linked (GlcNAc...) asparagine glycosylation is found at asparagine 20, asparagine 32, asparagine 48, and asparagine 110. 3 cysteine pairs are disulfide-bonded: cysteine 116–cysteine 130, cysteine 123–cysteine 134, and cysteine 129–cysteine 139.

This sequence belongs to the UPF0506 family.

The protein resides in the secreted. The protein is UPF0506 protein SJCHGC09643 of Schistosoma japonicum (Blood fluke).